The sequence spans 119 residues: Beta-2-microglobulin (119 aa).

The N-terminal stretch at methionine 1–alanine 20 is a signal peptide. The Ig-like C1-type domain occupies proline 25–lysine 114. A disulfide bridge connects residues cysteine 45 and cysteine 100.

The protein belongs to the beta-2-microglobulin family. As to quaternary structure, heterodimer of an alpha chain and a beta chain. Beta-2-microglobulin is the beta-chain of major histocompatibility complex class I molecules.

It is found in the secreted. In terms of biological role, component of the class I major histocompatibility complex (MHC). Involved in the presentation of peptide antigens to the immune system. This is Beta-2-microglobulin (B2M) from Macaca fascicularis (Crab-eating macaque).